The primary structure comprises 369 residues: Protein disulfide-isomerase erp38 (369 aa).

A signal peptide spans M1–A18. Thioredoxin domains follow at residues K19–G130 and V131–G251. Catalysis depends on nucleophile residues C50, C53, C170, and C173. 2 cysteine pairs are disulfide-bonded: C50–C53 and C170–C173. Positions K366–L369 match the Prevents secretion from ER motif.

The protein belongs to the protein disulfide isomerase family.

The protein localises to the endoplasmic reticulum lumen. The enzyme catalyses Catalyzes the rearrangement of -S-S- bonds in proteins.. The chain is Protein disulfide-isomerase erp38 (erp38) from Neurospora crassa (strain ATCC 24698 / 74-OR23-1A / CBS 708.71 / DSM 1257 / FGSC 987).